Reading from the N-terminus, the 663-residue chain is DNA ligase (663 aa).

NAD(+) is bound by residues 33 to 37 (DQEFD), 82 to 83 (SL), and Glu113. The N6-AMP-lysine intermediate role is filled by Lys115. NAD(+)-binding residues include Arg136, Glu170, Lys286, and Lys310. Zn(2+) is bound by residues Cys404, Cys407, Cys422, and Cys427. The BRCT domain maps to 587–663 (SSDPSLTGKL…IEESDLEDFL (77 aa)).

The protein belongs to the NAD-dependent DNA ligase family. LigA subfamily. The cofactor is Mg(2+). Mn(2+) is required as a cofactor.

The catalysed reaction is NAD(+) + (deoxyribonucleotide)n-3'-hydroxyl + 5'-phospho-(deoxyribonucleotide)m = (deoxyribonucleotide)n+m + AMP + beta-nicotinamide D-nucleotide.. Its function is as follows. DNA ligase that catalyzes the formation of phosphodiester linkages between 5'-phosphoryl and 3'-hydroxyl groups in double-stranded DNA using NAD as a coenzyme and as the energy source for the reaction. It is essential for DNA replication and repair of damaged DNA. The polypeptide is DNA ligase (Natranaerobius thermophilus (strain ATCC BAA-1301 / DSM 18059 / JW/NM-WN-LF)).